The sequence spans 707 residues: Translation initiation factor eIF2B subunit epsilon (707 aa).

Disordered regions lie at residues 489 to 526 (HDDI…SVKF) and 686 to 707 (AEEE…DESD). Positions 516–693 (DNPIEPDSVK…KSAEEESDDS (178 aa)) constitute a W2 domain. The segment covering 688-707 (EESDDSDDSDDDDDDSDESD) has biased composition (acidic residues).

Belongs to the eIF-2B gamma/epsilon subunits family. As to quaternary structure, component of the translation initiation factor 2B (eIF2B) complex which is a heterodecamer of two sets of five different subunits: alpha, beta, gamma, delta and epsilon. Subunits alpha, beta and delta comprise a regulatory subcomplex and subunits epsilon and gamma comprise a catalytic subcomplex. Within the complex, the hexameric regulatory complex resides at the center, with the two heterodimeric catalytic subcomplexes bound on opposite sides.

The protein resides in the cytoplasm. Its subcellular location is the cytosol. Functionally, acts as a component of the translation initiation factor 2B (eIF2B) complex, which catalyzes the exchange of GDP for GTP on eukaryotic initiation factor 2 (eIF2) gamma subunit. Its guanine nucleotide exchange factor activity is repressed when bound to eIF2 complex phosphorylated on the alpha subunit, thereby limiting the amount of methionyl-initiator methionine tRNA available to the ribosome and consequently global translation is repressed. In Dictyostelium discoideum (Social amoeba), this protein is Translation initiation factor eIF2B subunit epsilon (eif2b5).